A 590-amino-acid polypeptide reads, in one-letter code: Kinetochore protein ndc-80 (590 aa).

2 coiled-coil regions span residues 269–342 and 450–525; these read KGNE…KQIH and ELET…MKLD.

Belongs to the NDC80/HEC1 family. In terms of assembly, component of the NDC80 complex, which is composed of at least ndc-80 and him-10. The NDC80 complex interacts with knl-1. Interacts with the RZZ complex components rod-1 (via N-terminus) and zwl-1.

The protein localises to the nucleus. The protein resides in the chromosome. It is found in the centromere. Its subcellular location is the kinetochore. It localises to the cytoplasm. The protein localises to the cytoskeleton. Its function is as follows. Acts as a component of the essential kinetochore-associated ndc-80 complex, which is required for chromosome segregation in mitosis and meiosis and spindle checkpoint activity. Plays a role in kinetochore assembly and recruits the checkpoint protein mdf-2 and the spindly-like protein spdl-1 to unattached kinetochores. Mediates the formation of end-on kinetochore-microtubule attachments through recruitment of spdl-1. The ndc-80 complex synergistically enhances the affinity of the ska-1 complex for microtubules and may allow the ndc-80 complex to track depolymerizing microtubules. The chain is Kinetochore protein ndc-80 (ndc-80) from Caenorhabditis elegans.